A 134-amino-acid polypeptide reads, in one-letter code: Lymphocyte antigen 6 complex locus protein G6d (134 aa).

Positions 1 to 19 (MNSQLIGILFSALLGAALG) are cleaved as a signal peptide. In terms of domain architecture, UPAR/Ly6 spans 22–121 (MRCYDCGGGP…ASSSTPLCIL (100 aa)). 5 cysteine pairs are disulfide-bonded: Cys-24-Cys-48, Cys-27-Cys-35, Cys-42-Cys-76, Cys-82-Cys-101, and Cys-102-Cys-107. Thr-68 is a glycosylation site (O-linked (GalNAc...) threonine). Asn-108 carries GPI-anchor amidated asparagine lipidation. Positions 109 to 134 (GAVASSSTPLCILAAVTTLAWLLSGQ) are cleaved as a propeptide — removed in mature form.

As to quaternary structure, homodimer. O-glycosylated.

The protein localises to the cell membrane. The chain is Lymphocyte antigen 6 complex locus protein G6d (Ly6g6d) from Rattus norvegicus (Rat).